Consider the following 190-residue polypeptide: Negative regulator YfiR (190 aa).

Residue R60 participates in GMP binding. 2 disulfide bridges follow: C71-C110 and C145-C152. Residues R175 and H177 each coordinate GMP.

As to quaternary structure, homodimer. Interacts with TpbB/YfiN. Interacts with YfiB. The YfiB-YfiR complex is a 2:2 heterotetramer. In terms of processing, cys-71 and Cys-110 form a disulfide bond in the oxidized form but maintain their free form in the non-oxidized YfiR structure. The Cys-145-Cys-152 disulfide bond is well formed in both structures. The Cys145-Cys152 disulfide bond, but not Cys-71-Cys-110, plays an important role in maintaining the correct folding of the protein.

The protein resides in the periplasm. Its activity is regulated as follows. TpbB/YfiN repression is released through an YfiB-dependent sequestration of YfiR to the outer membrane. Binds vitamin B6 (VB6) or L-Trp at the periphery of the dimer, and both VB6 and L-Trp are able to reduce biofilm formation induced by YfiB L43P mutant. However, VB6 or L-Trp alone may have little effects in interrupting the YfiB-YfiR interaction. GMP enhances the binding affinity between YfiB and YfiR. Functionally, negatively regulates the activity of the diguanylate cyclase TpbB/YfiN, leading to decreased c-di-GMP production. Inhibits TpbB/YfiN allosterically, through a hydrophobic interaction between the C-terminus of YfiR and a conserved region of the periplasmic PAS domain of TpbB/YfiN. Under reducing conditions, may also act as an YfiB-independent sensing device that is able to activate TpbB/YfiN in response to the redox status of the periplasm. Its function is as follows. Part of the YfiB-TpbB-YfiR (or yfiBNR) system, encoding a tripartite signaling module that modulates intracellular c-di-GMP levels. The system is a key regulator of the small colony variant (SCV) phenotype, and plays an important role in biofilm formation and in vivo persistence. The c-di-GMP produced by TpbB/YfiN stimulates the production of the Pel and Psl exopolysaccharides, which promotes surface attachment, generates an SCV phenotype and confers resistance against phagocytosis. This Pseudomonas aeruginosa (strain ATCC 15692 / DSM 22644 / CIP 104116 / JCM 14847 / LMG 12228 / 1C / PRS 101 / PAO1) protein is Negative regulator YfiR.